A 453-amino-acid polypeptide reads, in one-letter code: SH2 domain-containing protein 4A (453 aa).

A coiled-coil region spans residues 96–127 (EIIAEQARREAEKEAEQLRKKQEVELSQLSTL). Residues 280–301 (AVKRPPIPPKPKLPPSANNSSI) are disordered. Residues 284 to 293 (PPIPPKPKLP) are compositionally biased toward pro residues. The 93-residue stretch at 347–439 (WFHGIISRQE…LGRELLRFPC (93 aa)) folds into the SH2 domain.

It is found in the cytoplasm. Inhibits estrogen-induced cell proliferation. The chain is SH2 domain-containing protein 4A (sh2d4a) from Xenopus tropicalis (Western clawed frog).